Here is a 167-residue protein sequence, read N- to C-terminus: UPF0114 protein in repA1-repA2 intergenic region (167 aa).

3 helical membrane-spanning segments follow: residues 15–35 (LMFPVNIGLSFGFILLTLKFF), 53–73 (LVLIVLSLIDIALVGGLLVMV), and 136–156 (IILCVIIHLTFVLSAFGMAYI).

Belongs to the UPF0114 family.

The protein localises to the cell membrane. The sequence is that of UPF0114 protein in repA1-repA2 intergenic region from Buchnera aphidicola subsp. Pterocomma populeum.